The sequence spans 220 residues: Transmembrane emp24 domain-containing protein 1 (220 aa).

Residues 1–19 (MAWSSSFLFIVLPLAAAVA) form the signal peptide. At 20 to 187 (VQPQDTELTF…LQDSNLERVN (168 aa)) the chain is on the extracellular side. The region spanning 36–118 (QECFYQTTLY…EKLVFFELIF (83 aa)) is the GOLD domain. A coiled-coil region spans residues 138–164 (ELLDIKLEDIKESIESVKSRLERSIQM). A helical membrane pass occupies residues 188-208 (FWSAINVGVLVTVAFLQVYML). Residues 209–220 (KSLFDDKRKIRT) are Cytoplasmic-facing. Residues 211–212 (LF) carry the COPII vesicle coat-binding motif. A COPI vesicle coat-binding motif is present at residues 211 to 220 (LFDDKRKIRT).

It belongs to the EMP24/GP25L family. In terms of assembly, homodimer in endoplasmic reticulum, endoplasmic reticulum-Golgi intermediate compartment and cis-Golgi network. Interacts with IL1RL1. Interacts with RNF26; this interaction is important to modulate innate immune signaling through the cGAS-STING pathway.

It localises to the cell membrane. The protein localises to the endoplasmic reticulum membrane. The protein resides in the golgi apparatus. It is found in the cis-Golgi network membrane. Its subcellular location is the endoplasmic reticulum-Golgi intermediate compartment membrane. Functionally, potential role in vesicular protein trafficking, mainly in the early secretory pathway. May act as a cargo receptor at the lumenal side for incorporation of secretory cargo molecules into transport vesicles and may be involved in vesicle coat formation at the cytoplasmic side. Plays a positive role in IL-33-mediated IL-8 and IL-6 production by interacting with interleukin-33 receptor IL1RL1. Plays also a role in the modulation of innate immune signaling through the cGAS-STING pathway by interacting with RNF26. The chain is Transmembrane emp24 domain-containing protein 1 (tmed1) from Xenopus tropicalis (Western clawed frog).